The sequence spans 84 residues: Exodeoxyribonuclease 7 small subunit (84 aa).

It belongs to the XseB family. As to quaternary structure, heterooligomer composed of large and small subunits.

The protein resides in the cytoplasm. It catalyses the reaction Exonucleolytic cleavage in either 5'- to 3'- or 3'- to 5'-direction to yield nucleoside 5'-phosphates.. In terms of biological role, bidirectionally degrades single-stranded DNA into large acid-insoluble oligonucleotides, which are then degraded further into small acid-soluble oligonucleotides. The sequence is that of Exodeoxyribonuclease 7 small subunit from Herminiimonas arsenicoxydans.